The chain runs to 259 residues: Glucose-1-phosphate thymidylyltransferase (259 aa).

This sequence belongs to the inositol monophosphatase superfamily.

The enzyme catalyses dTTP + alpha-D-glucose 1-phosphate + H(+) = dTDP-alpha-D-glucose + diphosphate. Its pathway is antibiotic biosynthesis; streptomycin biosynthesis. In Streptomyces griseus, this protein is Glucose-1-phosphate thymidylyltransferase (strO).